A 177-amino-acid polypeptide reads, in one-letter code: Adenine phosphoribosyltransferase (177 aa).

The protein belongs to the purine/pyrimidine phosphoribosyltransferase family. As to quaternary structure, homodimer.

Its subcellular location is the cytoplasm. The enzyme catalyses AMP + diphosphate = 5-phospho-alpha-D-ribose 1-diphosphate + adenine. Its pathway is purine metabolism; AMP biosynthesis via salvage pathway; AMP from adenine: step 1/1. In terms of biological role, catalyzes a salvage reaction resulting in the formation of AMP, that is energically less costly than de novo synthesis. This chain is Adenine phosphoribosyltransferase, found in Cutibacterium acnes (strain DSM 16379 / KPA171202) (Propionibacterium acnes).